The following is a 300-amino-acid chain: Glutamyl-Q tRNA(Asp) synthetase (300 aa).

L-glutamate contacts are provided by residues 8–12 (RFAPS) and E44. The 'HIGH' region motif lies at 11–21 (PSPTGALHAGS). Zn(2+) contacts are provided by C100, C102, Y126, and C130. L-glutamate-binding residues include Y190 and R208. The 'KMSKS' region motif lies at 246–250 (KLSKQ). K249 contributes to the ATP binding site.

Belongs to the class-I aminoacyl-tRNA synthetase family. GluQ subfamily. Zn(2+) is required as a cofactor.

In terms of biological role, catalyzes the tRNA-independent activation of glutamate in presence of ATP and the subsequent transfer of glutamate onto a tRNA(Asp). Glutamate is transferred on the 2-amino-5-(4,5-dihydroxy-2-cyclopenten-1-yl) moiety of the queuosine in the wobble position of the QUC anticodon. This chain is Glutamyl-Q tRNA(Asp) synthetase, found in Leptothrix cholodnii (strain ATCC 51168 / LMG 8142 / SP-6) (Leptothrix discophora (strain SP-6)).